A 105-amino-acid polypeptide reads, in one-letter code: Integration host factor subunit beta (105 aa).

Belongs to the bacterial histone-like protein family. In terms of assembly, heterodimer of an alpha and a beta chain.

This protein is one of the two subunits of integration host factor, a specific DNA-binding protein that functions in genetic recombination as well as in transcriptional and translational control. This is Integration host factor subunit beta from Bradyrhizobium sp. (strain ORS 278).